A 1366-amino-acid polypeptide reads, in one-letter code: DNA-directed RNA polymerase subunit beta (1366 aa).

It belongs to the RNA polymerase beta chain family. In terms of assembly, the RNAP catalytic core consists of 2 alpha, 1 beta, 1 beta' and 1 omega subunit. When a sigma factor is associated with the core the holoenzyme is formed, which can initiate transcription.

It catalyses the reaction RNA(n) + a ribonucleoside 5'-triphosphate = RNA(n+1) + diphosphate. DNA-dependent RNA polymerase catalyzes the transcription of DNA into RNA using the four ribonucleoside triphosphates as substrates. The sequence is that of DNA-directed RNA polymerase subunit beta from Polynucleobacter asymbioticus (strain DSM 18221 / CIP 109841 / QLW-P1DMWA-1) (Polynucleobacter necessarius subsp. asymbioticus).